The chain runs to 284 residues: Protoheme IX farnesyltransferase (284 aa).

The next 9 helical transmembrane spans lie at Ser-2–Val-19, Ile-23–Ser-45, Gly-69–Ala-89, Leu-92–Trp-112, Ile-121–Gly-141, Leu-148–Phe-168, Val-194–Gly-214, Leu-217–Trp-237, and Leu-263–Gly-283.

Belongs to the UbiA prenyltransferase family. Protoheme IX farnesyltransferase subfamily. Interacts with CtaA.

Its subcellular location is the cell inner membrane. It carries out the reaction heme b + (2E,6E)-farnesyl diphosphate + H2O = Fe(II)-heme o + diphosphate. The protein operates within porphyrin-containing compound metabolism; heme O biosynthesis; heme O from protoheme: step 1/1. Converts heme B (protoheme IX) to heme O by substitution of the vinyl group on carbon 2 of heme B porphyrin ring with a hydroxyethyl farnesyl side group. The protein is Protoheme IX farnesyltransferase of Cereibacter sphaeroides (Rhodobacter sphaeroides).